The sequence spans 156 residues: Protein eva-1 homolog A (156 aa).

The helical transmembrane segment at Ala40–Met60 threads the bilayer. The tract at residues Asp79–Ser100 is disordered. The span at Asp84–Ala96 shows a compositional bias: acidic residues. Thr110 is modified (phosphothreonine). At Ser118 the chain carries Phosphoserine.

Belongs to the EVA1 family.

It localises to the endoplasmic reticulum membrane. Its subcellular location is the lysosome membrane. Acts as a regulator of programmed cell death, mediating both autophagy and apoptosis. The sequence is that of Protein eva-1 homolog A (Eva1a) from Mus musculus (Mouse).